The following is a 378-amino-acid chain: Protein RecA (378 aa).

65–72 serves as a coordination point for ATP; sequence GPESSGKT. The interval 325-378 is disordered; that stretch reads AYGMDQTGEEDDQADDKSKDKATKPSDKSQAQAKPKKPVATETSLDLDDSKTDK. Residues 339 to 351 show a composition bias toward basic and acidic residues; that stretch reads DDKSKDKATKPSD.

This sequence belongs to the RecA family.

It localises to the cytoplasm. Its function is as follows. Can catalyze the hydrolysis of ATP in the presence of single-stranded DNA, the ATP-dependent uptake of single-stranded DNA by duplex DNA, and the ATP-dependent hybridization of homologous single-stranded DNAs. It interacts with LexA causing its activation and leading to its autocatalytic cleavage. This chain is Protein RecA, found in Lactiplantibacillus pentosus (Lactobacillus pentosus).